The primary structure comprises 338 residues: MKRMIALDGAQGEGGGQILRSALSLSMITGQPFTITSIRAGRAKPGLLRQHLTAVKAAAEICRATVEGAELGSQRLVFRPGTVRGGEYRFAIGSAGSCTLVLQTVLPALWFADGPSRVEVSGGTDNPSAPPADFIRRVLEPLLAKIGIHQQTTLLRHGFYPAGGGVVATEVSPVASFNTLQLGERGNIVQMRGEVLLAGVSRHVAEREIATLAGSFSLHEQNIHNLPRDQGPGNTVSLEVESENITERFFVVGEKRVSAEVVAAQLVKEVKRYLASPAAVGEYLADQLVLPMALAGAGEFKVAHPSCHLLTNIAVVERFLPVRFGLIETDGVTRVSIE.

Residues Gln-103 and 283 to 287 (YLADQ) contribute to the ATP site. His-308 acts as the Tele-AMP-histidine intermediate in catalysis.

Belongs to the RNA 3'-terminal cyclase family. Type 1 subfamily.

The protein localises to the cytoplasm. It catalyses the reaction a 3'-end 3'-phospho-ribonucleotide-RNA + ATP = a 3'-end 2',3'-cyclophospho-ribonucleotide-RNA + AMP + diphosphate. Catalyzes the conversion of 3'-phosphate to a 2',3'-cyclic phosphodiester at the end of RNA. The mechanism of action of the enzyme occurs in 3 steps: (A) adenylation of the enzyme by ATP; (B) transfer of adenylate to an RNA-N3'P to produce RNA-N3'PP5'A; (C) and attack of the adjacent 2'-hydroxyl on the 3'-phosphorus in the diester linkage to produce the cyclic end product. The biological role of this enzyme is unknown but it is likely to function in some aspects of cellular RNA processing. The sequence is that of RNA 3'-terminal phosphate cyclase from Escherichia coli O8 (strain IAI1).